Here is a 133-residue protein sequence, read N- to C-terminus: Small ribosomal subunit protein uS8 (133 aa).

It belongs to the universal ribosomal protein uS8 family. Part of the 30S ribosomal subunit. Contacts proteins S5 and S12.

Its function is as follows. One of the primary rRNA binding proteins, it binds directly to 16S rRNA central domain where it helps coordinate assembly of the platform of the 30S subunit. This chain is Small ribosomal subunit protein uS8, found in Chlamydia abortus (strain DSM 27085 / S26/3) (Chlamydophila abortus).